The chain runs to 181 residues: Oligoribonuclease (181 aa).

In terms of domain architecture, Exonuclease spans 8-171 (LIWIDLEMTG…DDIRESIAEL (164 aa)). Tyr-129 is a catalytic residue.

This sequence belongs to the oligoribonuclease family.

Its subcellular location is the cytoplasm. Its function is as follows. 3'-to-5' exoribonuclease specific for small oligoribonucleotides. The chain is Oligoribonuclease from Alcanivorax borkumensis (strain ATCC 700651 / DSM 11573 / NCIMB 13689 / SK2).